We begin with the raw amino-acid sequence, 205 residues long: LexA repressor (205 aa).

Positions 28–48 form a DNA-binding region, H-T-H motif; the sequence is RAEIARRLGFKSANAAEEHLK. Catalysis depends on for autocatalytic cleavage activity residues Ser122 and Lys159.

Belongs to the peptidase S24 family. Homodimer.

The catalysed reaction is Hydrolysis of Ala-|-Gly bond in repressor LexA.. In terms of biological role, represses a number of genes involved in the response to DNA damage (SOS response), including recA and lexA. In the presence of single-stranded DNA, RecA interacts with LexA causing an autocatalytic cleavage which disrupts the DNA-binding part of LexA, leading to derepression of the SOS regulon and eventually DNA repair. This Shewanella loihica (strain ATCC BAA-1088 / PV-4) protein is LexA repressor.